A 379-amino-acid chain; its full sequence is Presenilin-associated rhomboid-like protein, mitochondrial (379 aa).

Residues 1 to 52 (MAWRGWAQRGWGCGQAWGASVGGRSCEELTAVLTPPQLLGRRFNFFIQQKCG) constitute a mitochondrion transit peptide. Residues 53–101 (FRKAPRKVEPRRSDPGTSGEAYKRSALIPPVEETVFYPSPYPIRSLIKP) lie on the Mitochondrial matrix side of the membrane. Ser-65 carries the phosphoserine modification. Residue Thr-69 is modified to Phosphothreonine. Position 70 is a phosphoserine (Ser-70). The helical transmembrane segment at 102–121 (LFFTVGFTGCAFGSAAIWQY) threads the bilayer. The Mitochondrial intermembrane portion of the chain corresponds to 122–167 (ESLKSRVQSYFDGIKADWLDSIRPQKEGDFRKEINKWWNNLSDGQR). A helical membrane pass occupies residues 168–187 (TVTGIIAANVLVFCLWRVPS). Topologically, residues 188 to 207 (LQRTMIRYFTSNPASKVLCS) are mitochondrial matrix. A helical membrane pass occupies residues 208-230 (PMLLSTFSHFSLFHMAANMYVLW). Residues 231-244 (SFSSSIVNILGQEQ) lie on the Mitochondrial intermembrane side of the membrane. A helical transmembrane segment spans residues 245 to 262 (FMAVYLSAGVISNFVSYV). Residues 263 to 272 (GKVATGRYGP) lie on the Mitochondrial matrix side of the membrane. The helical transmembrane segment at 273–289 (SLGASGAIMTVLAAVCT) threads the bilayer. Ser-277 serves as the catalytic Nucleophile. Over 290-295 (KIPEGR) the chain is Mitochondrial intermembrane. Residues 296–318 (LAIIFLPMFTFTAGNALKAIIAM) traverse the membrane as a helical segment. Over 319–332 (DTAGMILGWKFFDH) the chain is Mitochondrial matrix. The helical transmembrane segment at 333–354 (AAHLGGALFGIWYVTYGHELIW) threads the bilayer. Residue His-335 is part of the active site. Over 355 to 379 (KNREPLVKIWHEIRTNGPKKGGGSK) the chain is Mitochondrial intermembrane.

This sequence belongs to the peptidase S54 family. Interacts with PSEN1 and PSEN2. Binds OPA1. In terms of processing, P-beta is proteolytically processed (beta-cleavage) in a PARL-dependent manner. The cleavage is inhibited when residues Ser-65, Thr-69 and Ser-70 are all phosphorylated.

The protein localises to the mitochondrion inner membrane. Its subcellular location is the nucleus. The enzyme catalyses Cleaves type-1 transmembrane domains using a catalytic dyad composed of serine and histidine that are contributed by different transmembrane domains.. Functionally, required for the control of apoptosis during postnatal growth. Essential for proteolytic processing of an antiapoptotic form of OPA1 which prevents the release of mitochondrial cytochrome c in response to intrinsic apoptotic signals. Required for the maturation of PINK1 into its 52kDa mature form after its cleavage by mitochondrial-processing peptidase (MPP). Promotes cleavage of serine/threonine-protein phosphatase PGAM5 in damaged mitochondria in response to loss of mitochondrial membrane potential. Mediates differential cleavage of PINK1 and PGAM5 depending on the health status of mitochondria, disassociating from PINK1 and associating with PGAM5 in response to mitochondrial membrane potential loss. Required for processing of CLPB into a form with higher protein disaggregase activity by removing an autoinhibitory N-terminal peptide. Promotes processing of DIABLO/SMAC in the mitochondrion which is required for DIABLO apoptotic activity. Also required for cleavage of STARD7 and TTC19. Promotes changes in mitochondria morphology regulated by phosphorylation of P-beta domain. This Homo sapiens (Human) protein is Presenilin-associated rhomboid-like protein, mitochondrial (PARL).